The primary structure comprises 770 residues: Endothelin-converting enzyme 1 (770 aa).

At 1–68 (MRGVWPPPVS…WAARTQVEKR (68 aa)) the chain is on the cytoplasmic side. Threonine 25 carries the post-translational modification Phosphothreonine. A helical; Signal-anchor for type II membrane protein transmembrane segment spans residues 69–89 (LVVLVVLLAAGLVACLAALGI). At 90–770 (QYQTRSPSVC…MNPPHKCEVW (681 aa)) the chain is on the extracellular side. A Peptidase M13 domain is found at 98–770 (VCLSEACVSV…MNPPHKCEVW (673 aa)). 5 cysteine pairs are disulfide-bonded: cysteine 99–cysteine 104, cysteine 122–cysteine 755, cysteine 130–cysteine 715, cysteine 185–cysteine 435, and cysteine 644–cysteine 767. Asparagine 166, asparagine 187, asparagine 210, asparagine 270, asparagine 316, asparagine 362, asparagine 383, and asparagine 539 each carry an N-linked (GlcNAc...) asparagine glycan. Zn(2+) is bound at residue histidine 607. The active site involves glutamate 608. Histidine 611 contributes to the Zn(2+) binding site. Asparagine 632 and asparagine 651 each carry an N-linked (GlcNAc...) asparagine glycan. Glutamate 667 serves as a coordination point for Zn(2+). Aspartate 671 acts as the Proton donor in catalysis.

The protein belongs to the peptidase M13 family. As to quaternary structure, homodimer; disulfide-linked. Interacts with PPP1R16B. Interacts with TSPAN8; this interaction recruits the endothelin converting enzyme ECE1 to tetraspanin-enriched microdomains and positively modulates its enzymatic activity. The cofactor is Zn(2+). All isoforms are expressed in umbilical vein endothelial cells, polynuclear neutrophils, fibroblasts, atrium cardiomyocytes and ventricles. Isoforms A, B and C are also expressed in placenta, lung, heart, adrenal gland and phaeochromocytoma; isoforms A and C in liver, testis and small intestine; isoform B, C and D in endothelial cells and umbilical vein smooth muscle cells; isoforms C and D in saphenous vein cells, and isoform C in kidney.

It localises to the cell membrane. It catalyses the reaction Hydrolysis of the 21-Trp-|-Val-22 bond in big endothelin to form endothelin 1.. Inhibited by phosphoramidon. Activated by K49-P1-20, a twenty-residue synthetic peptide shortened from the snake B.asper myotoxin II. In terms of biological role, converts big endothelin-1 to endothelin-1. In Homo sapiens (Human), this protein is Endothelin-converting enzyme 1 (ECE1).